A 299-amino-acid chain; its full sequence is 4-hydroxy-tetrahydrodipicolinate synthase (299 aa).

Thr50 contributes to the pyruvate binding site. Catalysis depends on Tyr139, which acts as the Proton donor/acceptor. The active-site Schiff-base intermediate with substrate is the Lys167. Residue Val209 participates in pyruvate binding.

This sequence belongs to the DapA family. Homotetramer; dimer of dimers.

It is found in the cytoplasm. The catalysed reaction is L-aspartate 4-semialdehyde + pyruvate = (2S,4S)-4-hydroxy-2,3,4,5-tetrahydrodipicolinate + H2O + H(+). The protein operates within amino-acid biosynthesis; L-lysine biosynthesis via DAP pathway; (S)-tetrahydrodipicolinate from L-aspartate: step 3/4. Catalyzes the condensation of (S)-aspartate-beta-semialdehyde [(S)-ASA] and pyruvate to 4-hydroxy-tetrahydrodipicolinate (HTPA). This Synechococcus elongatus (strain ATCC 33912 / PCC 7942 / FACHB-805) (Anacystis nidulans R2) protein is 4-hydroxy-tetrahydrodipicolinate synthase.